A 365-amino-acid polypeptide reads, in one-letter code: Cobalt-precorrin-5B C(1)-methyltransferase (365 aa).

It belongs to the CbiD family.

The catalysed reaction is Co-precorrin-5B + S-adenosyl-L-methionine = Co-precorrin-6A + S-adenosyl-L-homocysteine. It functions in the pathway cofactor biosynthesis; adenosylcobalamin biosynthesis; cob(II)yrinate a,c-diamide from sirohydrochlorin (anaerobic route): step 6/10. Functionally, catalyzes the methylation of C-1 in cobalt-precorrin-5B to form cobalt-precorrin-6A. In Variovorax paradoxus (strain S110), this protein is Cobalt-precorrin-5B C(1)-methyltransferase.